The sequence spans 669 residues: DNA ligase (669 aa).

Residues 35–39 (DSVYD), 84–85 (SL), and Glu-116 contribute to the NAD(+) site. The active-site N6-AMP-lysine intermediate is the Lys-118. NAD(+) contacts are provided by Arg-139, Glu-176, Lys-291, and Lys-315. Residues Cys-409, Cys-412, Cys-427, and Cys-432 each coordinate Zn(2+). A BRCT domain is found at 591-669 (TTKATLAGKT…EAQLLELIKA (79 aa)).

Belongs to the NAD-dependent DNA ligase family. LigA subfamily. Mg(2+) is required as a cofactor. The cofactor is Mn(2+).

The enzyme catalyses NAD(+) + (deoxyribonucleotide)n-3'-hydroxyl + 5'-phospho-(deoxyribonucleotide)m = (deoxyribonucleotide)n+m + AMP + beta-nicotinamide D-nucleotide.. In terms of biological role, DNA ligase that catalyzes the formation of phosphodiester linkages between 5'-phosphoryl and 3'-hydroxyl groups in double-stranded DNA using NAD as a coenzyme and as the energy source for the reaction. It is essential for DNA replication and repair of damaged DNA. The chain is DNA ligase from Microcystis aeruginosa (strain NIES-843 / IAM M-2473).